A 367-amino-acid chain; its full sequence is Auxin efflux carrier component 8 (367 aa).

At 1–6 the chain is on the extracellular side; it reads MISWLD. Residues 7-27 traverse the membrane as a helical segment; it reads IYHVVSATVPLYVSMTLGFLS. Residues 28–38 are Cytoplasmic-facing; sequence ARHLKLFSPEQ. Residues 39-59 traverse the membrane as a helical segment; it reads CAGINKFVAKFSIPLLSFQII. A (indol-3-yl)acetate-binding site is contributed by Ile51. The Extracellular segment spans residues 60–69; the sequence is SENNPFKMSP. The chain crosses the membrane as a helical span at residues 70-90; sequence KLILSDILQKFLVVVVLAMVL. Residues 91–105 are Cytoplasmic-facing; sequence RFWHPTGGRGGKLGW. Residues 106–126 form a helical membrane-spanning segment; sequence VITGLSISVLPNTLILGMPIL. (indol-3-yl)acetate-binding residues include Asn117 and Leu119. Over 127-136 the chain is Extracellular; that stretch reads SAIYGDEAAS. Residues 137-157 traverse the membrane as a helical segment; sequence ILEQIVVLQSLIWYTILLFLF. Position 150 (Tyr150) interacts with (indol-3-yl)acetate. The Cytoplasmic segment spans residues 158-227; the sequence is ELNAARALPS…LIINPNTYAT (70 aa). The tract at residues 168–194 is disordered; sequence SGASLEHTGNDQEEANIEDEPKEEEDE. Positions 178–194 are enriched in acidic residues; the sequence is DQEEANIEDEPKEEEDE. Residues 228-248 traverse the membrane as a helical segment; sequence LIGIIWATLHFRLGWNLPEMI. Topologically, residues 249 to 251 are extracellular; the sequence is DKS. A helical transmembrane segment spans residues 252–272; sequence IHLLSDGGLGMAMFSLGLFMA. At 273–288 the chain is on the cytoplasmic side; sequence SQSSIIACGTKMAIIT. The helical transmembrane segment at 289–309 threads the bilayer; it reads MLLKFVLGPALMIASAYCIRL. The Extracellular portion of the chain corresponds to 310 to 312; the sequence is KST. A helical membrane pass occupies residues 313–333; sequence LFKVAILQAALPQGVVPFVFA. Val327 and Val328 together coordinate (indol-3-yl)acetate. The Cytoplasmic portion of the chain corresponds to 334 to 344; that stretch reads KEYNLHPEIIS. A helical transmembrane segment spans residues 345-365; that stretch reads TGVIFGMLIALPTTLAYYFLL. The Extracellular segment spans residues 366–367; that stretch reads DL.

This sequence belongs to the auxin efflux carrier (TC 2.A.69.1) family. As to quaternary structure, homodimer. As to expression, expressed in veins of mature leaves. Strongly expressed in pollen.

It localises to the endoplasmic reticulum membrane. Its subcellular location is the cell membrane. With respect to regulation, auxin efflux carrier activity is competitively inhibited by naptalamate (N-1-naphthylphthalamic acid, NPA). Its function is as follows. Acts as a component of the auxin efflux carrier. Component of the intracellular auxin-transport pathway in the male gametophyte. Involved in the regulation of auxin homeostasis in pollen. Involved in the efflux of auxin from the endoplasmic reticulum into the cytoplasm. Binds auxins including indole-3-acetic acid (IAA), naphthaleneacetic acid (NAA) and the herbicide 2,4-dichlorophenoxyacetic acid (2,4-D), but barely indole-3-butyric acid (IBA) and 2-phenylacetic acid (PAA). PIN5 and PIN8 may have an antagonistic/compensatory activity. Involved in the control of vein patterning. Redundantly with PIN6, inhibits the vein-formation-promoting functions of PIN5. PIN5, PIN6, and PIN8 control vein network geometry, but they are expressed in mutually exclusive domains of leaf vascular cells. This chain is Auxin efflux carrier component 8, found in Arabidopsis thaliana (Mouse-ear cress).